Consider the following 183-residue polypeptide: Adenylate kinase (183 aa).

Residue 12-17 participates in ATP binding; that stretch reads GAGKGT. The NMP stretch occupies residues 32–61; sequence STGDLLRSEVAAGSELGKEAEAVMNRGELV. Residues Thr33, Arg38, 59–61, 86–89, and Gln93 each bind AMP; these read ELV and GFPR. An LID region spans residues 127–133; that stretch reads SRGRADD. Arg128 contributes to the ATP binding site. Arg130 and Arg141 together coordinate AMP. Residue Gly169 participates in ATP binding.

Belongs to the adenylate kinase family. In terms of assembly, monomer.

It is found in the cytoplasm. The enzyme catalyses AMP + ATP = 2 ADP. It participates in purine metabolism; AMP biosynthesis via salvage pathway; AMP from ADP: step 1/1. Its function is as follows. Catalyzes the reversible transfer of the terminal phosphate group between ATP and AMP. Plays an important role in cellular energy homeostasis and in adenine nucleotide metabolism. The polypeptide is Adenylate kinase (Synechococcus sp. (strain CC9902)).